Reading from the N-terminus, the 194-residue chain is Pyridoxine/pyridoxamine 5'-phosphate oxidase (194 aa).

FMN contacts are provided by residues 42 to 47 (RVVLLK), 57 to 58 (FT), arginine 63, lysine 64, and glutamine 86. A substrate-binding site is contributed by lysine 47. Positions 104, 108, and 112 each coordinate substrate. Residues 121-122 (QS) and tryptophan 166 each bind FMN. Residue 172–174 (RIH) coordinates substrate. Arginine 176 serves as a coordination point for FMN.

It belongs to the pyridoxamine 5'-phosphate oxidase family. As to quaternary structure, homodimer. The cofactor is FMN.

It carries out the reaction pyridoxamine 5'-phosphate + O2 + H2O = pyridoxal 5'-phosphate + H2O2 + NH4(+). The catalysed reaction is pyridoxine 5'-phosphate + O2 = pyridoxal 5'-phosphate + H2O2. It functions in the pathway cofactor metabolism; pyridoxal 5'-phosphate salvage; pyridoxal 5'-phosphate from pyridoxamine 5'-phosphate: step 1/1. Its pathway is cofactor metabolism; pyridoxal 5'-phosphate salvage; pyridoxal 5'-phosphate from pyridoxine 5'-phosphate: step 1/1. Catalyzes the oxidation of either pyridoxine 5'-phosphate (PNP) or pyridoxamine 5'-phosphate (PMP) into pyridoxal 5'-phosphate (PLP). In Ehrlichia ruminantium (strain Welgevonden), this protein is Pyridoxine/pyridoxamine 5'-phosphate oxidase.